The primary structure comprises 912 residues: Probable dipeptidyl-aminopeptidase B (912 aa).

Residues 1-25 show a composition bias toward basic and acidic residues; the sequence is MAAEKGESSDEERKPLTRDSMEYRD. Disordered stretches follow at residues 1–31 and 49–70; these read MAAE…NSLH and GSTH…SDDG. Residues 1-92 are Cytoplasmic-facing; it reads MAAEKGESSD…GGKPVQKKVK (92 aa). A helical; Signal-anchor for type II membrane protein transmembrane segment spans residues 93 to 113; that stretch reads IVLGFLLFLCLSGWSLSFVLF. The Vacuolar portion of the chain corresponds to 114-912; that stretch reads LFGGHESSKT…RAAIWVGLSI (799 aa). Residues asparagine 130, asparagine 210, asparagine 346, asparagine 569, and asparagine 656 are each glycosylated (N-linked (GlcNAc...) asparagine). Serine 751 (charge relay system) is an active-site residue. Asparagine 810 carries N-linked (GlcNAc...) asparagine glycosylation. Catalysis depends on charge relay system residues aspartate 828 and histidine 861. An N-linked (GlcNAc...) asparagine glycan is attached at asparagine 897.

The protein belongs to the peptidase S9B family.

Its subcellular location is the vacuole membrane. It catalyses the reaction Release of an N-terminal dipeptide, Xaa-Yaa-|-Zaa-, from a polypeptide, preferentially when Yaa is Pro, provided Zaa is neither Pro nor hydroxyproline.. Type IV dipeptidyl-peptidase which removes N-terminal dipeptides sequentially from polypeptides having unsubstituted N-termini provided that the penultimate residue is proline. This is Probable dipeptidyl-aminopeptidase B (DAPB) from Paracoccidioides lutzii (strain ATCC MYA-826 / Pb01) (Paracoccidioides brasiliensis).